A 467-amino-acid polypeptide reads, in one-letter code: Asparagine--tRNA ligase (467 aa).

It belongs to the class-II aminoacyl-tRNA synthetase family. As to quaternary structure, homodimer.

The protein resides in the cytoplasm. The catalysed reaction is tRNA(Asn) + L-asparagine + ATP = L-asparaginyl-tRNA(Asn) + AMP + diphosphate + H(+). The polypeptide is Asparagine--tRNA ligase (Bacteroides fragilis (strain ATCC 25285 / DSM 2151 / CCUG 4856 / JCM 11019 / LMG 10263 / NCTC 9343 / Onslow / VPI 2553 / EN-2)).